A 121-amino-acid polypeptide reads, in one-letter code: Large ribosomal subunit protein uL18 (121 aa).

The disordered stretch occupies residues 63–88; it reads AAIRPDPSPKKSQKQPPKTHKRYNLK. Positions 73–87 are enriched in basic residues; sequence KSQKQPPKTHKRYNL.

Belongs to the universal ribosomal protein uL18 family. In terms of assembly, component of the large ribosomal subunit (LSU).

Its subcellular location is the cytoplasm. It is found in the nucleus. In terms of biological role, component of the ribosome, a large ribonucleoprotein complex responsible for the synthesis of proteins in the cell. The small ribosomal subunit (SSU) binds messenger RNAs (mRNAs) and translates the encoded message by selecting cognate aminoacyl-transfer RNA (tRNA) molecules. The large subunit (LSU) contains the ribosomal catalytic site termed the peptidyl transferase center (PTC), which catalyzes the formation of peptide bonds, thereby polymerizing the amino acids delivered by tRNAs into a polypeptide chain. The nascent polypeptides leave the ribosome through a tunnel in the LSU and interact with protein factors that function in enzymatic processing, targeting, and the membrane insertion of nascent chains at the exit of the ribosomal tunnel. The protein is Large ribosomal subunit protein uL18 (RPL5) of Solanum melongena (Eggplant).